Here is a 121-residue protein sequence, read N- to C-terminus: Large ribosomal subunit protein uL14c (121 aa).

The protein belongs to the universal ribosomal protein uL14 family. As to quaternary structure, part of the 50S ribosomal subunit.

The protein resides in the plastid. Its subcellular location is the chloroplast. Its function is as follows. Binds to 23S rRNA. The protein is Large ribosomal subunit protein uL14c of Euglena gracilis.